We begin with the raw amino-acid sequence, 676 residues long: ATP-dependent zinc metalloprotease FTSH 2, chloroplastic (676 aa).

The transit peptide at 1–32 (MAPTSMSLAAKTPLPFSTLPSSGVAQRPVSVT) directs the protein to the chloroplast. The chain crosses the membrane as a helical span at residues 155-175 (LLFNLIGNLAFPLILIGGLFL). 254–261 (GPPGTGKT) contacts ATP. A Zn(2+)-binding site is contributed by histidine 475. Glutamate 476 is an active-site residue. Zn(2+) contacts are provided by histidine 479 and aspartate 553.

This sequence in the N-terminal section; belongs to the AAA ATPase family. It in the C-terminal section; belongs to the peptidase M41 family. It depends on Zn(2+) as a cofactor.

The protein resides in the plastid. It localises to the chloroplast thylakoid membrane. Functionally, probable ATP-dependent zinc metallopeptidase. In Oryza sativa subsp. japonica (Rice), this protein is ATP-dependent zinc metalloprotease FTSH 2, chloroplastic (FTSH2).